Consider the following 247-residue polypeptide: UPF0309 protein lin2794 (247 aa).

The region spanning 31-214 (VAESIENDGV…EKMVNDNFTP (184 aa)) is the SIS domain.

Belongs to the UPF0309 family.

This chain is UPF0309 protein lin2794, found in Listeria innocua serovar 6a (strain ATCC BAA-680 / CLIP 11262).